Reading from the N-terminus, the 130-residue chain is Small ribosomal subunit protein uS9 (130 aa).

The protein belongs to the universal ribosomal protein uS9 family.

The chain is Small ribosomal subunit protein uS9 from Magnetococcus marinus (strain ATCC BAA-1437 / JCM 17883 / MC-1).